The chain runs to 57 residues: UPF0434 protein swp_2279 (57 aa).

This sequence belongs to the UPF0434 family.

The protein is UPF0434 protein swp_2279 of Shewanella piezotolerans (strain WP3 / JCM 13877).